Consider the following 1023-residue polypeptide: Sodium/potassium-transporting ATPase subunit alpha-1 (1023 aa).

Positions 1–5 (MGKGV) are excised as a propeptide. Positions 1–11 (MGKGVGRDKYE) are enriched in basic and acidic residues. Residues 1-38 (MGKGVGRDKYEPAAVSEHGDKKGKKAKKERDMDELKKE) are disordered. Topologically, residues 6-87 (GRDKYEPAAV…NALTPPPTTP (82 aa)) are cytoplasmic. Lys-9 is subject to N6-acetyllysine. Position 10 is a phosphotyrosine (Tyr-10). Ser-16 is subject to Phosphoserine; by PKC. Lys-21 is subject to N6-acetyllysine. Basic and acidic residues predominate over residues 28 to 38 (KERDMDELKKE). Phosphoserine occurs at positions 40 and 47. The interval 82–84 (PPP) is phosphoinositide-3 kinase binding. The helical transmembrane segment at 88 to 108 (EWVKFCRQLFGGFSMLLWIGA) threads the bilayer. Residues 109 to 131 (ILCFLAYGILAATEEDFDNDNLY) lie on the Extracellular side of the membrane. The chain crosses the membrane as a helical span at residues 132-152 (LGVVLAAVVIITGCFSYYQEA). Residues 153 to 288 (KSSKIMESFK…GGQTPIAAEI (136 aa)) are Cytoplasmic-facing. A disordered region spans residues 216 to 235 (SSLTGESEPQTRSPDFTNEN). At Ser-228 the chain carries Phosphoserine. Tyr-260 carries the phosphotyrosine modification. A helical membrane pass occupies residues 289 to 308 (EHFIHIITGVAVFLGVSFFI). Residues 309–320 (LSLILEYTWLEA) lie on the Extracellular side of the membrane. The chain crosses the membrane as a helical span at residues 321 to 338 (VIFLIGIIVANVPEGLLA). Residues 339–772 (TVTVCLTLTA…EEGRLIFDNL (434 aa)) lie on the Cytoplasmic side of the membrane. Asp-376 (4-aspartylphosphate intermediate) is an active-site residue. Phosphoserine occurs at positions 452 and 484. Lys-487 contributes to the ATP binding site. Tyr-542 bears the Phosphotyrosine mark. The interval 596-717 (RAAVPDAVGK…QGAIVAVTGD (122 aa)) is mediates interaction with SCN7A. An N6-succinyllysine modification is found at Lys-661. Residues Ser-668 and Ser-675 each carry the phosphoserine modification. Residues Asp-717 and Asp-721 each coordinate Mg(2+). The helical transmembrane segment at 773 to 792 (KKSIAYTLTSNIPEITPFLI) threads the bilayer. Residues 793 to 802 (FIIANIPLPL) are Extracellular-facing. Residues 803–823 (GTVTILCIDLGTDMVPAISLA) form a helical membrane-spanning segment. The Cytoplasmic segment spans residues 824–843 (YEQAESDIMKRQPRNPKTDK). The helical transmembrane segment at 844 to 866 (LVNERLISMAYGQIGMIQALGGF) threads the bilayer. The Extracellular portion of the chain corresponds to 867–918 (FTYFVILAENGFLPFHLLGIRVDWDDRWINDVEDSYGQQWTYEQRKIVEFTC). A helical transmembrane segment spans residues 919-938 (HTAFFVSIVVVQWADLVICK). The Cytoplasmic segment spans residues 939–951 (TRRNSVFQQGMKN). Residue Ser-943 is modified to Phosphoserine; by PKA. Residues 952–970 (KILIFGLFEETALAAFLSY) form a helical membrane-spanning segment. Over 971–985 (CPGMGVALRMYPLKP) the chain is Extracellular. The chain crosses the membrane as a helical span at residues 986–1006 (TWWFCAFPYSLLIFVYDEIRK). At 1007-1023 (LIIRRRPGGWVEKETYY) the chain is on the cytoplasmic side.

The protein belongs to the cation transport ATPase (P-type) (TC 3.A.3) family. Type IIC subfamily. The sodium/potassium-transporting ATPase is composed of a catalytic alpha subunit, an auxiliary non-catalytic beta subunit and an additional regulatory subunit. Interacts with regulatory subunit FXYD1. Interacts with regulatory subunit FXYD3. Interacts with SIK1. Interacts with SLC35G1 and STIM1. Interacts with CLN3; this interaction regulates the sodium/potassium-transporting ATPase complex localization at the plasma membrane. Interacts with SCN7A; activates ATP1A1 P-type sodium:potassium-exchanging transporter activity which indirectly signals to nearby neurons to regulate sodium homeostasis. Post-translationally, phosphorylation on Tyr-10 modulates pumping activity. Phosphorylation of Ser-943 by PKA modulates the response of ATP1A1 to PKC. Dephosphorylation by protein phosphatase 2A (PP2A) following increases in intracellular sodium, leading to increase catalytic activity. In terms of tissue distribution, expressed in endocardial endothelial cells.

The protein localises to the cell membrane. Its subcellular location is the basolateral cell membrane. It is found in the sarcolemma. It localises to the cell projection. The protein resides in the axon. The protein localises to the melanosome. It catalyses the reaction K(+)(out) + Na(+)(in) + ATP + H2O = K(+)(in) + Na(+)(out) + ADP + phosphate + H(+). Functionally, this is the catalytic component of the active enzyme, which catalyzes the hydrolysis of ATP coupled with the exchange of sodium and potassium ions across the plasma membrane. This action creates the electrochemical gradient of sodium and potassium ions, providing the energy for active transport of various nutrients. Could also be part of an osmosensory signaling pathway that senses body-fluid sodium levels and controls salt intake behavior as well as voluntary water intake to regulate sodium homeostasis. The protein is Sodium/potassium-transporting ATPase subunit alpha-1 (ATP1A1) of Oryctolagus cuniculus (Rabbit).